The following is a 179-amino-acid chain: ADP-ribosylation factor 1-like 1 (179 aa).

The N-myristoyl glycine moiety is linked to residue Gly-2. The important for the stable binding to the membranes stretch occupies residues 3–16; it reads LFFSKISSFMFPNI. GTP-binding positions include 24 to 32, 126 to 129, and Ala-160; these read GLDGAGKTT and NKQD.

This sequence belongs to the small GTPase superfamily. Arf family.

Its subcellular location is the golgi apparatus membrane. It carries out the reaction GTP + H2O = GDP + phosphate + H(+). With respect to regulation, alternates between an inactive GDP-bound form and an active GTP-bound form. Activated by a guanine nucleotide-exchange factor (GEF) and inactivated by GTPase-activating protein (GAP). Functionally, small GTPase involved in protein trafficking between different compartments. Modulates vesicle budding and uncoating within the Golgi complex. In its GTP-bound form, triggers the recruitment of coatomer proteins to the Golgi membrane. The hydrolysis of ARF1-bound GTP, which is mediated by ARFGAPs proteins, is required for dissociation of coat proteins from Golgi membranes and vesicles. In Caenorhabditis elegans, this protein is ADP-ribosylation factor 1-like 1 (arf-1.1).